A 339-amino-acid polypeptide reads, in one-letter code: DNA-directed RNA polymerase subunit alpha (339 aa).

The alpha N-terminal domain (alpha-NTD) stretch occupies residues 1–233 (MVREEITGST…DLFLPFIHTE (233 aa)). The interval 266–339 (GIPLNCIFID…IDLPKNKFSL (74 aa)) is alpha C-terminal domain (alpha-CTD).

Belongs to the RNA polymerase alpha chain family. In terms of assembly, in plastids the minimal PEP RNA polymerase catalytic core is composed of four subunits: alpha, beta, beta', and beta''. When a (nuclear-encoded) sigma factor is associated with the core the holoenzyme is formed, which can initiate transcription.

It localises to the plastid. It is found in the chloroplast. The catalysed reaction is RNA(n) + a ribonucleoside 5'-triphosphate = RNA(n+1) + diphosphate. DNA-dependent RNA polymerase catalyzes the transcription of DNA into RNA using the four ribonucleoside triphosphates as substrates. This Sorghum bicolor (Sorghum) protein is DNA-directed RNA polymerase subunit alpha.